A 286-amino-acid polypeptide reads, in one-letter code: L-rhamnose-binding lectin CSL1 (286 aa).

2 consecutive SUEL-type lectin domains span residues 96–186 (TTCE…YICL) and 193–280 (TCEG…YTCL).

In terms of biological role, L-rhamnose binding lectin. Has hemagglutinating activity towards rabbit erythrocytes, but not human type B erythrocytes. Hemagglutinating activity is inhibited by smooth-type lipopolysaccharide (LPS) from K.pneumoniae, E.coli K-235, S.flexneri 1A, A.salmonicida and S.minnesota and rough-type LPS from S.flexneri, but not by rough-type LPS from E.coli K12 and E.coli EH100. Agglutinates E.coli K12 and B.subtilis. The protein is L-rhamnose-binding lectin CSL1 of Oncorhynchus keta (Chum salmon).